The primary structure comprises 296 residues: Cholesterol ring-cleaving hydrolase IpdA subunit (296 aa).

Belongs to the 3-oxoacid CoA-transferase subunit A family. As to quaternary structure, heterotetramer composed of 2 IpdA subunits and 2 IpdB subunits.

It carries out the reaction (3E)-2-(2-carboxylatoethyl)-3-methyl-6-oxocyclohex-1-ene-1-carboxyl-CoA + H2O = 6-methyl-3,7-dioxodecanedioyl-CoA. It participates in steroid metabolism; cholesterol degradation. Involved in the final steps of cholesterol and steroid degradation. Opens the last steroid ring of cholesterol by catalyzing the hydrolysis of (3E)-2-(2-carboxylatoethyl)-3-methyl-6-oxocyclohex-1-ene-1-carboxyl-CoA (COCHEA-CoA) to 6-methyl-3,7-dioxodecanedioyl-CoA (MeDODA-CoA). This is Cholesterol ring-cleaving hydrolase IpdA subunit from Rhodococcus jostii (strain RHA1).